The primary structure comprises 300 residues: Nucleotide-binding protein MCCL_0516 (300 aa).

An ATP-binding site is contributed by 15–22; sequence GMSGAGKS. 66–69 lines the GTP pocket; sequence DLRG.

Belongs to the RapZ-like family.

Its function is as follows. Displays ATPase and GTPase activities. In Macrococcus caseolyticus (strain JCSC5402) (Macrococcoides caseolyticum), this protein is Nucleotide-binding protein MCCL_0516.